A 290-amino-acid chain; its full sequence is Pyridoxal kinase PdxY (290 aa).

Substrate is bound by residues S12 and 47 to 48 (TQ). ATP is bound by residues D114, E151, K184, and 211 to 214 (RPLL). Residue D225 coordinates substrate.

Belongs to the pyridoxine kinase family. PdxY subfamily. In terms of assembly, homodimer. It depends on Mg(2+) as a cofactor.

It carries out the reaction pyridoxal + ATP = pyridoxal 5'-phosphate + ADP + H(+). Its pathway is cofactor metabolism; pyridoxal 5'-phosphate salvage; pyridoxal 5'-phosphate from pyridoxal: step 1/1. In terms of biological role, pyridoxal kinase involved in the salvage pathway of pyridoxal 5'-phosphate (PLP). Catalyzes the phosphorylation of pyridoxal to PLP. The sequence is that of Pyridoxal kinase PdxY from Pseudomonas putida (strain ATCC 700007 / DSM 6899 / JCM 31910 / BCRC 17059 / LMG 24140 / F1).